Consider the following 424-residue polypeptide: Adenylosuccinate synthetase (424 aa).

GTP contacts are provided by residues 12-18 and 40-42; these read GDEGKGK and GHT. Asp-13 functions as the Proton acceptor in the catalytic mechanism. 2 residues coordinate Mg(2+): Asp-13 and Gly-40. IMP-binding positions include 13 to 16, 38 to 41, Thr-130, Arg-144, Asn-220, Thr-235, and Arg-299; these read DEGK and NAGH. The Proton donor role is filled by His-41. Position 295–301 (295–301) interacts with substrate; it reads VTTGRRR. Residues Arg-301, 327-329, and 412-414 contribute to the GTP site; these read KLD and GTG.

It belongs to the adenylosuccinate synthetase family. As to quaternary structure, homodimer. Requires Mg(2+) as cofactor.

It is found in the cytoplasm. The catalysed reaction is IMP + L-aspartate + GTP = N(6)-(1,2-dicarboxyethyl)-AMP + GDP + phosphate + 2 H(+). The protein operates within purine metabolism; AMP biosynthesis via de novo pathway; AMP from IMP: step 1/2. In terms of biological role, plays an important role in the de novo pathway and in the salvage pathway of purine nucleotide biosynthesis. Catalyzes the first committed step in the biosynthesis of AMP from IMP. This Aspergillus fumigatus (strain CBS 144.89 / FGSC A1163 / CEA10) (Neosartorya fumigata) protein is Adenylosuccinate synthetase.